The sequence spans 54 residues: uncharacterized protein (54 aa).

Basic and acidic residues-rich tracts occupy residues 1 to 19 (MTEK…HNDL) and 26 to 54 (EELK…YDTK). The tract at residues 1 to 54 (MTEKKQQNKPNENPEHNDLTDPIPNEELKENMNDEKHKRQQRDNSQSERDYDTK) is disordered.

This is an uncharacterized protein from Bacillus subtilis (strain 168).